The chain runs to 127 residues: Translation initiation factor 5A (127 aa).

K36 bears the Hypusine mark.

This sequence belongs to the eIF-5A family.

Its subcellular location is the cytoplasm. Functionally, functions by promoting the formation of the first peptide bond. The protein is Translation initiation factor 5A (eif5a) of Halobacterium salinarum (strain ATCC 700922 / JCM 11081 / NRC-1) (Halobacterium halobium).